Consider the following 275-residue polypeptide: Fructose-2,6-bisphosphatase TIGAR (275 aa).

The active-site Tele-phosphohistidine intermediate is the His11. Glu89 acts as the Proton donor/acceptor in catalysis.

The protein belongs to the phosphoglycerate mutase family.

It localises to the cytoplasm. Its subcellular location is the nucleus. The protein localises to the mitochondrion. The enzyme catalyses beta-D-fructose 2,6-bisphosphate + H2O = beta-D-fructose 6-phosphate + phosphate. In terms of biological role, fructose-bisphosphatase hydrolyzing fructose-2,6-bisphosphate as well as fructose-1,6-bisphosphate. Acts as a negative regulator of glycolysis by lowering intracellular levels of fructose-2,6-bisphosphate in a p53/TP53-dependent manner, resulting in the pentose phosphate pathway (PPP) activation and NADPH production. Contributes to the generation of reduced glutathione to cause a decrease in intracellular reactive oxygen species (ROS) content, correlating with its ability to protect cells from oxidative or metabolic stress-induced cell death. May play a role in mitophagy inhibition. This chain is Fructose-2,6-bisphosphatase TIGAR, found in Xenopus tropicalis (Western clawed frog).